The chain runs to 76 residues: UPF0270 protein PSPA7_1664 (76 aa).

It belongs to the UPF0270 family.

The polypeptide is UPF0270 protein PSPA7_1664 (Pseudomonas paraeruginosa (strain DSM 24068 / PA7) (Pseudomonas aeruginosa (strain PA7))).